The sequence spans 109 residues: Thioredoxin-like protein slr1139 (109 aa).

One can recognise a Thioredoxin domain in the interval 2–107 (SLLEITDAEF…LLELLKEELD (106 aa)). Residues Cys31 and Cys34 are joined by a disulfide bond.

This sequence belongs to the thioredoxin family.

This is Thioredoxin-like protein slr1139 from Synechocystis sp. (strain ATCC 27184 / PCC 6803 / Kazusa).